The primary structure comprises 1414 residues: MKALLDLFKQVSQDEQFDAIKIGIASPEKIRSWSFGEVRKPETINYRTFKPERDGLFCAKIFGPIKDYECLCGKYKRLKHRGVICEKCGVEVTVAKVRRERMGHIELASPVAHIWFLKSLPSRLGMVLDMTLRDIERVLYFEAWCVIEPGMTPLKRGQIMSDDDFLAKTEEYGDDFRALMGAEAVRELLRTIDIDREVETLRGELKATSSEAKIKKISKRLKVLEGFQKSGIKAEWMVMEVLPVLPPDLRPLVPLDGGRFATSDLNDLYRRVINRNNRLKRLLELKAPEIILRNEKRMLQEAVDSLLDNGRRGKAMTGANKRQLKSLADMIKGKSGRFRQNLLGKRVDYSGRSVIVVGPQLKLHQCGLPKLMALELFKPFIFNRLEMMGLATTIKAAKKLVESQEPVVWDILEEVIREHPVMLNRAPTLHRLGIQAFEPVLIEGKAIQLHPLVCAAFNADFDGDQMAVHVPLSLEAQLEARTLMLASNNVLFPANGEPSIVPSQDIVLGLYYTTRERINGKGEGIFFADVSEVQRAYDNGEVELQTRITVRLTEYERDEQGEWQPVKHRHETTVGRALLSEILPKGLPFTVLNKALKKKEISRLINQSFRRCGLRDTVIFADKLMQSGFRLATRGGISIAMEDMLIPKAKEGILAEASREVKEIDKQYSSGLVTSQERYNNVVDIWGKAGDKVGKAMMEQLATEPVVNRHGEEVRQESFNSIYMMADSGARGSAAQIRQLAGMRGLMAKPDGSIIETPITANFREGLNVLQYFISTHGARKGLADTALKTANSGYLTRRLVDVTQDLVITEDDCGTSHGYAMKALVEGGEVIEPLRDRILGRVAAIDVVNPDTQETAIAAGTLLDEDLVDLIDRLGVDEVKVRTPLTCETRHGLCAHCYGRDLGRGSHVNVGEAVGVIAAQSIGEPGTQLTMRTFHIGGAASRSALASAVETKSNGTVGFASTMRYVTNAKGERVAISRSGELAIFDDNGRERERHKIPYGATVLVGDGEAVKAGTRLASWDPLTRPIVSEYSGAVRFENIEEGVTVAKQVDEVTGLSTLVVITPKTRGGKIVMRPQIKLVNENGEDVKIAGTDHSVNISFPVGALITVRDGQQVAVGEVLARIPQESQKTRDITGGLPRVAELFEARSPKDAGMLAEVTGTVSFGKDTKGKQRLVITDLEGVSHEFLILKEKQVLVHDGQVVNKGEMIVDGPADPHDILRLQGIEKLATYIVDEVQDVYRLQGVKINDKHIEVIVRQMLRRVNIVDPGDTEFIPGEQVERSELLNENDRVVAEDKRPASYDNVLLGITKASLSTDSFISAASFQETTRVLTEAAIMGKRDDLRGLKENVIVGRLIPAGTGLAYHIARKDKEALEAAEREAARQLANPFEDAPVTVGGEPEAPAADTPSDDSAE.

Residues cysteine 70, cysteine 72, cysteine 85, and cysteine 88 each contribute to the Zn(2+) site. Residues aspartate 460, aspartate 462, and aspartate 464 each coordinate Mg(2+). 4 residues coordinate Zn(2+): cysteine 814, cysteine 888, cysteine 895, and cysteine 898. The disordered stretch occupies residues 1378–1414; the sequence is EREAARQLANPFEDAPVTVGGEPEAPAADTPSDDSAE.

Belongs to the RNA polymerase beta' chain family. As to quaternary structure, the RNAP catalytic core consists of 2 alpha, 1 beta, 1 beta' and 1 omega subunit. When a sigma factor is associated with the core the holoenzyme is formed, which can initiate transcription. It depends on Mg(2+) as a cofactor. The cofactor is Zn(2+).

The catalysed reaction is RNA(n) + a ribonucleoside 5'-triphosphate = RNA(n+1) + diphosphate. In terms of biological role, DNA-dependent RNA polymerase catalyzes the transcription of DNA into RNA using the four ribonucleoside triphosphates as substrates. This chain is DNA-directed RNA polymerase subunit beta', found in Bordetella bronchiseptica (strain ATCC BAA-588 / NCTC 13252 / RB50) (Alcaligenes bronchisepticus).